Consider the following 361-residue polypeptide: Large ribosomal subunit protein uL3 (361 aa).

The span at 1–14 shows a compositional bias: basic residues; sequence MGRGGRRNPGRPRR. Disordered stretches follow at residues 1-33 and 337-361; these read MGRGGRRNPGRPRRGSLAFSPRKRASRPVPRIR and TSQQGVRPKASEDEIVEQLGGPASA.

The protein belongs to the universal ribosomal protein uL3 family. In terms of assembly, part of the 50S ribosomal subunit. Forms a cluster with proteins L14 and L24e.

Functionally, one of the primary rRNA binding proteins, it binds directly near the 3'-end of the 23S rRNA, where it nucleates assembly of the 50S subunit. This Methanopyrus kandleri (strain AV19 / DSM 6324 / JCM 9639 / NBRC 100938) protein is Large ribosomal subunit protein uL3.